The following is an 87-amino-acid chain: Small ribosomal subunit protein eS21 (87 aa).

This sequence belongs to the eukaryotic ribosomal protein eS21 family. As to quaternary structure, component of the small ribosomal subunit (SSU). Mature N.crassa ribosomes consist of a small (40S) and a large (60S) subunit. The 40S small subunit contains 1 molecule of ribosomal RNA (18S rRNA) and at least 32 different proteins. The large 60S subunit contains 3 rRNA molecules (26S, 5.8S and 5S rRNA) and at least 42 different proteins.

It is found in the cytoplasm. Its function is as follows. Component of the ribosome, a large ribonucleoprotein complex responsible for the synthesis of proteins in the cell. The small ribosomal subunit (SSU) binds messenger RNAs (mRNAs) and translates the encoded message by selecting cognate aminoacyl-transfer RNA (tRNA) molecules. The large subunit (LSU) contains the ribosomal catalytic site termed the peptidyl transferase center (PTC), which catalyzes the formation of peptide bonds, thereby polymerizing the amino acids delivered by tRNAs into a polypeptide chain. The nascent polypeptides leave the ribosome through a tunnel in the LSU and interact with protein factors that function in enzymatic processing, targeting, and the membrane insertion of nascent chains at the exit of the ribosomal tunnel. In Neurospora crassa (strain ATCC 24698 / 74-OR23-1A / CBS 708.71 / DSM 1257 / FGSC 987), this protein is Small ribosomal subunit protein eS21 (crp-7).